Here is a 563-residue protein sequence, read N- to C-terminus: Membrane protein insertase YidC (563 aa).

A helical transmembrane segment spans residues 6-26; sequence TVLWMIFSFSLLLLWNNWQIH. Positions 36–70 are disordered; the sequence is PAPEAAATQQPKADANGTAASSTASIPSSPAAAPA. Residues 54-70 are compositionally biased toward low complexity; the sequence is AASSTASIPSSPAAAPA. Transmembrane regions (helical) follow at residues 373-393, 443-463, 482-502, and 512-532; these read WGWT…PLAA, LPMV…LASV, PFFI…KLNP, and VMMI…AGLV.

The protein belongs to the OXA1/ALB3/YidC family. Type 1 subfamily. In terms of assembly, interacts with the Sec translocase complex via SecD. Specifically interacts with transmembrane segments of nascent integral membrane proteins during membrane integration.

The protein resides in the cell membrane. In terms of biological role, required for the insertion and/or proper folding and/or complex formation of integral membrane proteins into the membrane. Involved in integration of membrane proteins that insert both dependently and independently of the Sec translocase complex, as well as at least some lipoproteins. Aids folding of multispanning membrane proteins. The protein is Membrane protein insertase YidC of Bordetella bronchiseptica (strain ATCC BAA-588 / NCTC 13252 / RB50) (Alcaligenes bronchisepticus).